The primary structure comprises 115 residues: Large ribosomal subunit protein bL20 (115 aa).

The protein belongs to the bacterial ribosomal protein bL20 family.

Functionally, binds directly to 23S ribosomal RNA and is necessary for the in vitro assembly process of the 50S ribosomal subunit. It is not involved in the protein synthesizing functions of that subunit. The protein is Large ribosomal subunit protein bL20 of Prochlorococcus marinus subsp. pastoris (strain CCMP1986 / NIES-2087 / MED4).